Consider the following 175-residue polypeptide: Co-chaperone protein HscB homolog (175 aa).

In terms of domain architecture, J spans 2–76 (NYFALFNLTP…RAEHMLELRG (75 aa)).

Belongs to the HscB family. Interacts with HscA and stimulates its ATPase activity.

In terms of biological role, co-chaperone involved in the maturation of iron-sulfur cluster-containing proteins. Seems to help targeting proteins to be folded toward HscA. This chain is Co-chaperone protein HscB homolog, found in Pseudoalteromonas atlantica (strain T6c / ATCC BAA-1087).